The following is a 180-amino-acid chain: Shikimate kinase (180 aa).

Glycine 14 to threonine 19 lines the ATP pocket. Residue serine 18 coordinates Mg(2+). Aspartate 36, arginine 60, and glycine 82 together coordinate substrate. Arginine 120 contributes to the ATP binding site. Residue arginine 140 coordinates substrate. Residue glutamine 157 coordinates ATP.

The protein belongs to the shikimate kinase family. Monomer. It depends on Mg(2+) as a cofactor.

Its subcellular location is the cytoplasm. The catalysed reaction is shikimate + ATP = 3-phosphoshikimate + ADP + H(+). Its pathway is metabolic intermediate biosynthesis; chorismate biosynthesis; chorismate from D-erythrose 4-phosphate and phosphoenolpyruvate: step 5/7. Catalyzes the specific phosphorylation of the 3-hydroxyl group of shikimic acid using ATP as a cosubstrate. This Haemophilus influenzae (strain PittGG) protein is Shikimate kinase.